Consider the following 279-residue polypeptide: MGIVFNYIDPVAFNLGPLSVRWYGIIIAVGILLGYFVAQRALVKAGLHKDTLVDIIFYSALFGFIAARIYFVIFQWPYYVENPSEIIKIWHGGIAIHGGLIGGFIAGVIVCKVKNLNPFQIGDIVAPSIILAQGIGRWGNFMNHEAHGGPVSRAFLEKLHLPNFIIENMYINGQYYHPTFLYESIWDVAGFIILVNIRKHLKLGETFFLYLTWYSIGRFFIEGLRTDSLMLTSNIRVAQLVSILLILISISLIVYRRIKYNPPLYSKVGALPWPTKKVK.

The next 3 membrane-spanning stretches (helical) occupy residues 18–38 (LSVR…YFVA), 55–75 (IIFY…VIFQ), and 89–109 (IWHG…AGVI). R137 contributes to the a 1,2-diacyl-sn-glycero-3-phospho-(1'-sn-glycerol) binding site. 2 helical membrane passes run 203–223 (LGET…FIEG) and 235–255 (IRVA…LIVY).

Belongs to the Lgt family.

The protein resides in the cell membrane. The catalysed reaction is L-cysteinyl-[prolipoprotein] + a 1,2-diacyl-sn-glycero-3-phospho-(1'-sn-glycerol) = an S-1,2-diacyl-sn-glyceryl-L-cysteinyl-[prolipoprotein] + sn-glycerol 1-phosphate + H(+). It participates in protein modification; lipoprotein biosynthesis (diacylglyceryl transfer). Catalyzes the transfer of the diacylglyceryl group from phosphatidylglycerol to the sulfhydryl group of the N-terminal cysteine of a prolipoprotein, the first step in the formation of mature lipoproteins. The polypeptide is Phosphatidylglycerol--prolipoprotein diacylglyceryl transferase (Staphylococcus aureus (strain MSSA476)).